The primary structure comprises 349 residues: Aldehyde reductase YahK (349 aa).

Positions 40, 62, 93, 96, 99, 107, and 158 each coordinate Zn(2+).

Belongs to the zinc-containing alcohol dehydrogenase family. It depends on Zn(2+) as a cofactor.

The catalysed reaction is a primary alcohol + NADP(+) = an aldehyde + NADPH + H(+). In terms of biological role, catalyzes the reduction of a wide range of aldehydes into their corresponding alcohols. Has a strong preference for NADPH over NADH as the electron donor. Cannot use a ketone as substrate. Is a major source of NADPH-dependent aldehyde reductase activity in E.coli. The in vivo functions of YahK has yet to be determined. This chain is Aldehyde reductase YahK (yahK), found in Escherichia coli (strain K12).